The primary structure comprises 343 residues: Holliday junction branch migration complex subunit RuvB (343 aa).

The tract at residues 1–185 (MEQEDFNIRE…FGINLHLEYY (185 aa)) is large ATPase domain (RuvB-L). Residues L24, R25, G66, K69, T70, T71, 132 to 134 (EDY), R175, Y185, and R222 each bind ATP. Residue T70 coordinates Mg(2+). The interval 186–256 (DDDILSNIIR…IAQFALEALN (71 aa)) is small ATPAse domain (RuvB-S). The interval 259 to 343 (KYGLDEIDNK…YSSQKTLFND (85 aa)) is head domain (RuvB-H). The DNA site is built by R314 and R319.

Belongs to the RuvB family. As to quaternary structure, homohexamer. Forms an RuvA(8)-RuvB(12)-Holliday junction (HJ) complex. HJ DNA is sandwiched between 2 RuvA tetramers; dsDNA enters through RuvA and exits via RuvB. An RuvB hexamer assembles on each DNA strand where it exits the tetramer. Each RuvB hexamer is contacted by two RuvA subunits (via domain III) on 2 adjacent RuvB subunits; this complex drives branch migration. In the full resolvosome a probable DNA-RuvA(4)-RuvB(12)-RuvC(2) complex forms which resolves the HJ.

Its subcellular location is the cytoplasm. The enzyme catalyses ATP + H2O = ADP + phosphate + H(+). Functionally, the RuvA-RuvB-RuvC complex processes Holliday junction (HJ) DNA during genetic recombination and DNA repair, while the RuvA-RuvB complex plays an important role in the rescue of blocked DNA replication forks via replication fork reversal (RFR). RuvA specifically binds to HJ cruciform DNA, conferring on it an open structure. The RuvB hexamer acts as an ATP-dependent pump, pulling dsDNA into and through the RuvAB complex. RuvB forms 2 homohexamers on either side of HJ DNA bound by 1 or 2 RuvA tetramers; 4 subunits per hexamer contact DNA at a time. Coordinated motions by a converter formed by DNA-disengaged RuvB subunits stimulates ATP hydrolysis and nucleotide exchange. Immobilization of the converter enables RuvB to convert the ATP-contained energy into a lever motion, pulling 2 nucleotides of DNA out of the RuvA tetramer per ATP hydrolyzed, thus driving DNA branch migration. The RuvB motors rotate together with the DNA substrate, which together with the progressing nucleotide cycle form the mechanistic basis for DNA recombination by continuous HJ branch migration. Branch migration allows RuvC to scan DNA until it finds its consensus sequence, where it cleaves and resolves cruciform DNA. The chain is Holliday junction branch migration complex subunit RuvB from Bacteroides thetaiotaomicron (strain ATCC 29148 / DSM 2079 / JCM 5827 / CCUG 10774 / NCTC 10582 / VPI-5482 / E50).